Here is a 234-residue protein sequence, read N- to C-terminus: Probable pectate lyase F (234 aa).

The N-terminal stretch at 1–17 (MWSSIAAFPVLVPVALA) is a signal peptide.

This sequence belongs to the polysaccharide lyase 3 family. It depends on Ca(2+) as a cofactor.

Its subcellular location is the secreted. It carries out the reaction Eliminative cleavage of (1-&gt;4)-alpha-D-galacturonan to give oligosaccharides with 4-deoxy-alpha-D-galact-4-enuronosyl groups at their non-reducing ends.. Functionally, pectinolytic enzyme consist of four classes of enzymes: pectin lyase, polygalacturonase, pectin methylesterase and rhamnogalacturonase. Among pectinolytic enzymes, pectin lyase is the most important in depolymerization of pectin, since it cleaves internal glycosidic bonds of highly methylated pectins. Favors pectate, the anion, over pectin, the methyl ester. This chain is Probable pectate lyase F (plyF), found in Aspergillus fumigatus (strain ATCC MYA-4609 / CBS 101355 / FGSC A1100 / Af293) (Neosartorya fumigata).